The following is a 192-amino-acid chain: Potassium-transporting ATPase KdpC subunit (192 aa).

The helical transmembrane segment at 7 to 27 threads the bilayer; sequence PLIVIFAVLTAVTGLAYPAVM.

The protein belongs to the KdpC family. As to quaternary structure, the system is composed of three essential subunits: KdpA, KdpB and KdpC.

The protein localises to the cell inner membrane. Its function is as follows. Part of the high-affinity ATP-driven potassium transport (or Kdp) system, which catalyzes the hydrolysis of ATP coupled with the electrogenic transport of potassium into the cytoplasm. This subunit acts as a catalytic chaperone that increases the ATP-binding affinity of the ATP-hydrolyzing subunit KdpB by the formation of a transient KdpB/KdpC/ATP ternary complex. The sequence is that of Potassium-transporting ATPase KdpC subunit from Paraburkholderia phytofirmans (strain DSM 17436 / LMG 22146 / PsJN) (Burkholderia phytofirmans).